The sequence spans 63 residues: uncharacterized protein (63 aa).

The next 2 membrane-spanning stretches (helical) occupy residues 3–23 and 42–62; these read VFLIVLSCITLAFASGAVYYI and ALVCSTGTAFTLCLIFFTKLL.

It is found in the cell membrane. This is an uncharacterized protein from Bacillus subtilis (strain 168).